The primary structure comprises 116 residues: Large ribosomal subunit protein bL19 (116 aa).

It belongs to the bacterial ribosomal protein bL19 family.

In terms of biological role, this protein is located at the 30S-50S ribosomal subunit interface and may play a role in the structure and function of the aminoacyl-tRNA binding site. The chain is Large ribosomal subunit protein bL19 from Clostridium beijerinckii (strain ATCC 51743 / NCIMB 8052) (Clostridium acetobutylicum).